Consider the following 219-residue polypeptide: Tetratricopeptide repeat protein 9A (219 aa).

The tract at residues 1 to 49 (MERKGLAARSSGNPSPPALGEGPRPVPPPCVPSGGGAPERGQAGTAAEP) is disordered. The TPR 1 repeat unit spans residues 56 to 89 (AHEFKSQGAQCYKDKKFREAIGKYHRALLELKGL). The interval 94–115 (EERDARPASSAGVPKSSRLSEE) is disordered. S102 is subject to Phosphoserine. TPR repeat units follow at residues 125-160 (IDCY…EGEN) and 161-194 (FKAL…QPTD).

It belongs to the TTC9 family.

The polypeptide is Tetratricopeptide repeat protein 9A (Ttc9) (Mus musculus (Mouse)).